The sequence spans 315 residues: Ribosomal RNA small subunit methyltransferase H (315 aa).

Residues 35–37, D55, F79, D101, and Q108 each bind S-adenosyl-L-methionine; that span reads GGH.

Belongs to the methyltransferase superfamily. RsmH family.

The protein localises to the cytoplasm. It carries out the reaction cytidine(1402) in 16S rRNA + S-adenosyl-L-methionine = N(4)-methylcytidine(1402) in 16S rRNA + S-adenosyl-L-homocysteine + H(+). Specifically methylates the N4 position of cytidine in position 1402 (C1402) of 16S rRNA. The protein is Ribosomal RNA small subunit methyltransferase H of Photobacterium profundum (strain SS9).